A 161-amino-acid chain; its full sequence is Endoribonuclease YbeY (161 aa).

Residues histidine 127, histidine 131, and histidine 137 each coordinate Zn(2+).

Belongs to the endoribonuclease YbeY family. It depends on Zn(2+) as a cofactor.

The protein resides in the cytoplasm. Functionally, single strand-specific metallo-endoribonuclease involved in late-stage 70S ribosome quality control and in maturation of the 3' terminus of the 16S rRNA. In Listeria monocytogenes serotype 4b (strain CLIP80459), this protein is Endoribonuclease YbeY.